We begin with the raw amino-acid sequence, 590 residues long: Urease subunit alpha (590 aa).

A Urease domain is found at 134–590; it reads GGIDSHIHFI…LPLAQRYFLF (457 aa). Positions 139, 141, and 222 each coordinate Ni(2+). At K222 the chain carries N6-carboxylysine. Substrate is bound at residue H224. Ni(2+) is bound by residues H251 and H277. H325 acts as the Proton donor in catalysis. Position 365 (D365) interacts with Ni(2+). Residues 388-416 form a disordered region; sequence QQRGWLSPPAAGQGAGLSSAAGQGVDHDT. Residues 393–411 are compositionally biased toward low complexity; sequence LSPPAAGQGAGLSSAAGQG.

It belongs to the metallo-dependent hydrolases superfamily. Urease alpha subunit family. Heterotrimer of UreA (gamma), UreB (beta) and UreC (alpha) subunits. Three heterotrimers associate to form the active enzyme. Requires Ni cation as cofactor. Post-translationally, carboxylation allows a single lysine to coordinate two nickel ions.

Its subcellular location is the cytoplasm. The catalysed reaction is urea + 2 H2O + H(+) = hydrogencarbonate + 2 NH4(+). Its pathway is nitrogen metabolism; urea degradation; CO(2) and NH(3) from urea (urease route): step 1/1. The protein is Urease subunit alpha of Verminephrobacter eiseniae (strain EF01-2).